Reading from the N-terminus, the 130-residue chain is Small ribosomal subunit protein uS11 (130 aa).

It belongs to the universal ribosomal protein uS11 family. In terms of assembly, part of the 30S ribosomal subunit. Interacts with proteins S7 and S18. Binds to IF-3.

Its function is as follows. Located on the platform of the 30S subunit, it bridges several disparate RNA helices of the 16S rRNA. Forms part of the Shine-Dalgarno cleft in the 70S ribosome. The chain is Small ribosomal subunit protein uS11 from Nautilia profundicola (strain ATCC BAA-1463 / DSM 18972 / AmH).